A 417-amino-acid polypeptide reads, in one-letter code: Serine hydroxymethyltransferase (417 aa).

(6S)-5,6,7,8-tetrahydrofolate contacts are provided by residues Leu-120 and 124-126 (GHL). Lys-229 carries the post-translational modification N6-(pyridoxal phosphate)lysine.

Belongs to the SHMT family. As to quaternary structure, homodimer. Requires pyridoxal 5'-phosphate as cofactor.

It is found in the cytoplasm. It catalyses the reaction (6R)-5,10-methylene-5,6,7,8-tetrahydrofolate + glycine + H2O = (6S)-5,6,7,8-tetrahydrofolate + L-serine. It functions in the pathway one-carbon metabolism; tetrahydrofolate interconversion. It participates in amino-acid biosynthesis; glycine biosynthesis; glycine from L-serine: step 1/1. Its function is as follows. Catalyzes the reversible interconversion of serine and glycine with tetrahydrofolate (THF) serving as the one-carbon carrier. This reaction serves as the major source of one-carbon groups required for the biosynthesis of purines, thymidylate, methionine, and other important biomolecules. Also exhibits THF-independent aldolase activity toward beta-hydroxyamino acids, producing glycine and aldehydes, via a retro-aldol mechanism. The chain is Serine hydroxymethyltransferase from Anaeromyxobacter dehalogenans (strain 2CP-C).